A 97-amino-acid polypeptide reads, in one-letter code: Down syndrome critical region protein 8 (97 aa).

As to expression, expressed in numerous tissues; not found in breast, heart, small intestine and liver. Isoform 1: Predominantly expressed in the testis. Isoform 3: Predominantly expressed in the testis, at lower level in the placenta, during malignant progression of melanocytic tumors and in several tumors of varying origins. Isoform 4: Predominantly expressed in the testis, at lower level in the placenta, during malignant progression of melanocytic tumors and in several tumors of varying origins. Isoform 5: Predominantly expressed in the testis. Isoform 6: Predominantly expressed in the testis.

This chain is Down syndrome critical region protein 8, found in Homo sapiens (Human).